A 446-amino-acid polypeptide reads, in one-letter code: Argininosuccinate lyase (446 aa).

This sequence belongs to the lyase 1 family. Argininosuccinate lyase subfamily.

It is found in the cytoplasm. It catalyses the reaction 2-(N(omega)-L-arginino)succinate = fumarate + L-arginine. Its pathway is amino-acid biosynthesis; L-arginine biosynthesis; L-arginine from L-ornithine and carbamoyl phosphate: step 3/3. This is Argininosuccinate lyase from Sulfurisphaera tokodaii (strain DSM 16993 / JCM 10545 / NBRC 100140 / 7) (Sulfolobus tokodaii).